The chain runs to 323 residues: uncharacterized protein (323 aa).

It localises to the mitochondrion. This is an uncharacterized protein from Schizosaccharomyces pombe (strain 972 / ATCC 24843) (Fission yeast).